We begin with the raw amino-acid sequence, 186 residues long: Adenine phosphoribosyltransferase (186 aa).

This sequence belongs to the purine/pyrimidine phosphoribosyltransferase family. In terms of assembly, homodimer.

The protein resides in the cytoplasm. It carries out the reaction AMP + diphosphate = 5-phospho-alpha-D-ribose 1-diphosphate + adenine. It functions in the pathway purine metabolism; AMP biosynthesis via salvage pathway; AMP from adenine: step 1/1. Catalyzes a salvage reaction resulting in the formation of AMP, that is energically less costly than de novo synthesis. The polypeptide is Adenine phosphoribosyltransferase (Xanthomonas campestris pv. campestris (strain 8004)).